A 324-amino-acid polypeptide reads, in one-letter code: tRNA dimethylallyltransferase (324 aa).

Residue Gly17–Thr24 coordinates ATP. Thr19–Thr24 serves as a coordination point for substrate. 4 interaction with substrate tRNA regions span residues Asp42–Leu45, Gln166–Arg170, Arg251–Arg256, and Lys284–Arg291.

This sequence belongs to the IPP transferase family. As to quaternary structure, monomer. Requires Mg(2+) as cofactor.

The catalysed reaction is adenosine(37) in tRNA + dimethylallyl diphosphate = N(6)-dimethylallyladenosine(37) in tRNA + diphosphate. Functionally, catalyzes the transfer of a dimethylallyl group onto the adenine at position 37 in tRNAs that read codons beginning with uridine, leading to the formation of N6-(dimethylallyl)adenosine (i(6)A). The chain is tRNA dimethylallyltransferase from Burkholderia lata (strain ATCC 17760 / DSM 23089 / LMG 22485 / NCIMB 9086 / R18194 / 383).